The sequence spans 677 residues: Collagen alpha-2(IX) chain (677 aa).

An N-terminal signal peptide occupies residues 1 to 21 (MAHRSPALCLLLLHAACLCLA). The tract at residues 25–161 (GPPGEPGPRG…PGKPGPPGHI (137 aa)) is triple-helical region 4 (COL4). A compositionally biased stretch (pro residues) spans 28–41 (GEPGPRGPPGPPGV). Residues 28–516 (GEPGPRGPPG…MPGQRGVAGR (489 aa)) are disordered. The segment covering 53 to 66 (SPGAPGSPGAKGEP) has biased composition (low complexity). Residues 68-77 (APGPDGPPGK) are compositionally biased toward pro residues. Residues 91 to 100 (GPWGGQGLKG) show a composition bias toward gly residues. Pro residues-rich tracts occupy residues 104 to 121 (LPGP…PPGL) and 137 to 158 (KGDP…PGPP). Pro-158 is modified (4-hydroxyproline). Residues 162-178 (QGVEGSADFLCPTNCPP) form a nonhelical region 4 (NC4) region. A glycan (O-linked (Xyl...) (glycosaminoglycan) serine) is linked at Ser-167. Residue Pro-178 is modified to 4-hydroxyproline. Positions 179 to 517 (GPKGPQGLQG…PGQRGVAGRD (339 aa)) are triple-helical region 3 (COL3). A 5-hydroxylysine modification is found at Lys-181. O-linked (Gal...) hydroxylysine glycosylation occurs at Lys-181. The residue at position 190 (Lys-190) is an Allysine. 3 stretches are compositionally biased toward low complexity: residues 363 to 382 (TPGL…AGVP), 430 to 442 (PGKT…TGDP), and 496 to 505 (RGLLGERGVP). Residues 518–547 (AGDQHIIDVVLKMMQEQLAEVAVSAKRAAL) form a nonhelical region 3 (NC3) region. Residues 548–630 (GGVGAMGPPG…PGLPGIPGHA (83 aa)) form a triple-helical region 2 (COL2) region. Residues 550 to 657 (VGAMGPPGPP…GRPGSPGPAG (108 aa)) are disordered. Residues 555–565 (PPGPPGPPGPP) show a composition bias toward pro residues. The span at 597 to 609 (KRGEKGERGDTGR) shows a compositional bias: basic and acidic residues. The tract at residues 631–632 (LA) is nonhelical region 2 (NC2). The triple-helical region 1 (COL1) stretch occupies residues 633-662 (GKDGERGPPGVPGDAGRPGSPGPAGLPGFC). The nonhelical region 1 (NC1) stretch occupies residues 663 to 677 (EPAACLGALPTPRHG).

This sequence belongs to the fibril-associated collagens with interrupted helices (FACIT) family. As to quaternary structure, heterotrimer of an alpha 1(IX), an alpha 2(IX) and an alpha 3(IX) chain. The chains are linked to each other by interchain disulfide bonds. Trimers are also cross-linked via hydroxylysines. Post-translationally, covalently linked to the telopeptides of type II collagen by lysine-derived cross-links. Prolines at the third position of the tripeptide repeating unit (G-X-Y) are hydroxylated in some or all of the chains.

The protein resides in the secreted. It is found in the extracellular space. Its subcellular location is the extracellular matrix. Functionally, structural component of hyaline cartilage and vitreous of the eye. In Gallus gallus (Chicken), this protein is Collagen alpha-2(IX) chain (COL9A2).